Here is a 248-residue protein sequence, read N- to C-terminus: Ubiquinone/menaquinone biosynthesis C-methyltransferase UbiE (248 aa).

Positions 68 and 92 each coordinate S-adenosyl-L-methionine.

This sequence belongs to the class I-like SAM-binding methyltransferase superfamily. MenG/UbiE family.

The catalysed reaction is a 2-demethylmenaquinol + S-adenosyl-L-methionine = a menaquinol + S-adenosyl-L-homocysteine + H(+). It carries out the reaction a 2-methoxy-6-(all-trans-polyprenyl)benzene-1,4-diol + S-adenosyl-L-methionine = a 5-methoxy-2-methyl-3-(all-trans-polyprenyl)benzene-1,4-diol + S-adenosyl-L-homocysteine + H(+). It functions in the pathway quinol/quinone metabolism; menaquinone biosynthesis; menaquinol from 1,4-dihydroxy-2-naphthoate: step 2/2. The protein operates within cofactor biosynthesis; ubiquinone biosynthesis. Functionally, methyltransferase required for the conversion of demethylmenaquinol (DMKH2) to menaquinol (MKH2) and the conversion of 2-polyprenyl-6-methoxy-1,4-benzoquinol (DDMQH2) to 2-polyprenyl-3-methyl-6-methoxy-1,4-benzoquinol (DMQH2). This chain is Ubiquinone/menaquinone biosynthesis C-methyltransferase UbiE, found in Rickettsia bellii (strain RML369-C).